The chain runs to 249 residues: Triosephosphate isomerase (249 aa).

Residues N12 and K14 each contribute to the substrate site. N6-acetyllysine is present on K14. The residue at position 16 (N16) is a Deamidated asparagine. Position 68 is a 3'-nitrotyrosine (Y68). A Deamidated asparagine modification is found at N72. Phosphoserine is present on S80. H96 functions as the Electrophile in the catalytic mechanism. At S106 the chain carries Phosphoserine. A Glycyl lysine isopeptide (Lys-Gly) (interchain with G-Cter in SUMO1) cross-link involves residue K142. N6-succinyllysine is present on K149. The residue at position 156 (K156) is an N6-acetyllysine; alternate. K156 carries the post-translational modification N6-succinyllysine; alternate. Phosphoserine is present on S159. The active-site Proton acceptor is E166. Phosphothreonine is present on T173. K194 is subject to N6-acetyllysine; alternate. K194 carries the N6-succinyllysine; alternate modification. K194 bears the N6-methyllysine; alternate mark. A Phosphoserine modification is found at S198. Residue Y209 is modified to 3'-nitrotyrosine. Phosphoserine is present on S212. T214 bears the Phosphothreonine mark. A Phosphoserine modification is found at S223. N6-acetyllysine is present on K238.

The protein belongs to the triosephosphate isomerase family. As to quaternary structure, homodimer. Asn-16 and Asn-72 undergo deamidation which gives rise to four extra negative charges. These are expected to decrease subunit-subunit interactions and so expose the hydrophobic interface to the aqueous environment.

The protein resides in the cytoplasm. The catalysed reaction is D-glyceraldehyde 3-phosphate = dihydroxyacetone phosphate. The enzyme catalyses dihydroxyacetone phosphate = methylglyoxal + phosphate. Its pathway is carbohydrate degradation; glycolysis; D-glyceraldehyde 3-phosphate from glycerone phosphate: step 1/1. It participates in carbohydrate biosynthesis; gluconeogenesis. Triosephosphate isomerase is an extremely efficient metabolic enzyme that catalyzes the interconversion between dihydroxyacetone phosphate (DHAP) and D-glyceraldehyde-3-phosphate (G3P) in glycolysis and gluconeogenesis. Functionally, it is also responsible for the non-negligible production of methylglyoxal a reactive cytotoxic side-product that modifies and can alter proteins, DNA and lipids. The chain is Triosephosphate isomerase (TPI1) from Oryctolagus cuniculus (Rabbit).